A 620-amino-acid chain; its full sequence is Threonine--tRNA ligase (620 aa).

An editing domain region spans residues 1-141 (MKMLLIHSDY…LSRKIVAKEE (141 aa)). Residues 197-496 (PHVKFIKEKD…AEKGNAPMLP (300 aa)) are catalytic. Zn(2+) contacts are provided by cysteine 289, histidine 341, and histidine 465.

Belongs to the class-II aminoacyl-tRNA synthetase family. Homodimer. Requires Zn(2+) as cofactor.

The protein resides in the cytoplasm. It catalyses the reaction tRNA(Thr) + L-threonine + ATP = L-threonyl-tRNA(Thr) + AMP + diphosphate + H(+). With respect to regulation, not inhibited by 1 uM borrelidin (BN); probably does not bind BN. Catalyzes the attachment of threonine to tRNA(Thr) in a two-step reaction: L-threonine is first activated by ATP to form Thr-AMP and then transferred to the acceptor end of tRNA(Thr). Also activates L-serine, but does not detectably transfer it to tRNA(Thr). Edits incorrectly charged L-seryl-tRNA(Thr) via its editing domain. Has no activity on correctly acylated L-seryl-tRNA(Ser) or L-threonyl-tRNA(Thr). Deacylates correctly charged glycyl-tRNA(Gly), but not glycyl-tRNA(Gly)(2'-dA76) (the terminal 2'-OH of tRNA adenine 76 has been dehydroxylated) nor the 2'-fluoro tRNA derivative, strongly suggesting the editing function is tRNA catalyzed. The protein is Threonine--tRNA ligase of Methanocaldococcus jannaschii (strain ATCC 43067 / DSM 2661 / JAL-1 / JCM 10045 / NBRC 100440) (Methanococcus jannaschii).